The sequence spans 375 residues: 23S rRNA (uracil(747)-C(5))-methyltransferase RlmC (375 aa).

The [4Fe-4S] cluster site is built by Cys-3, Cys-11, Cys-14, and Cys-87. Gln-212, Phe-241, Glu-262, and Asn-307 together coordinate S-adenosyl-L-methionine. Cys-334 (nucleophile) is an active-site residue.

It belongs to the class I-like SAM-binding methyltransferase superfamily. RNA M5U methyltransferase family. RlmC subfamily.

It carries out the reaction uridine(747) in 23S rRNA + S-adenosyl-L-methionine = 5-methyluridine(747) in 23S rRNA + S-adenosyl-L-homocysteine + H(+). Functionally, catalyzes the formation of 5-methyl-uridine at position 747 (m5U747) in 23S rRNA. This Shigella flexneri serotype 5b (strain 8401) protein is 23S rRNA (uracil(747)-C(5))-methyltransferase RlmC.